The sequence spans 613 residues: Pescadillo homolog (613 aa).

Residues 259–344 (KELSNELETK…MKQIEHDIIX (86 aa)) are a coiled coil. The interval 268–333 (KESTEDNIIE…KNDQKNDQKN (66 aa)) is disordered. Over residues 278–333 (ENEKKTKNGKTENCEKNDQENEKKTKNDKTKNCEKNDQKNDQKNDQKNDQKNDQKN) the composition is skewed to basic and acidic residues. The BRCT domain maps to 350–453 (SVKNLFKNHI…MILSCEDYNI (104 aa)). The interval 485–517 (LSEDPQYNKSIQKNKTNSENKXNNYNDNENDMS) is disordered. Residues 492 to 601 (NKSIQKNKTN…ENRQKLTIEK (110 aa)) are a coiled coil. The span at 497–511 (KNKTNSENKXNNYND) shows a compositional bias: low complexity.

This sequence belongs to the pescadillo family.

The protein localises to the nucleus. It localises to the nucleolus. The protein resides in the nucleoplasm. In terms of biological role, required for maturation of ribosomal RNAs and formation of the large ribosomal subunit. This Plasmodium yoelii yoelii protein is Pescadillo homolog.